A 303-amino-acid polypeptide reads, in one-letter code: MQKFDTRTFQGLILTLQDYWARQGCTIVQPLDMEVGAGTSHPMTCLRALGPEPMATAYVQPSRRPTDGRYGENPNRLQHYYQFQVVIKPSPDNIQELYLGSLKELGMDPTIHDIRFVEDNWENPTLGAWGLGWEVWLNGMEVTQFTYFQQVGGLECKPVTGEITYGLERLAMYIQGVDSVYDLVWSDGPLGKTTYGDVFHQNEVEQSTYNFEYADVDFLFTCFEQYEKEAQQLLALETPLPLPAYERILKAAHSFNLLDARKAISVTERQRYILRIRTLTKAVAEAYYASREALGFPMCNKNK.

This sequence belongs to the class-II aminoacyl-tRNA synthetase family. In terms of assembly, tetramer of two alpha and two beta subunits.

It is found in the cytoplasm. The catalysed reaction is tRNA(Gly) + glycine + ATP = glycyl-tRNA(Gly) + AMP + diphosphate. The sequence is that of Glycine--tRNA ligase alpha subunit from Klebsiella pneumoniae subsp. pneumoniae (strain ATCC 700721 / MGH 78578).